The primary structure comprises 258 residues: Aspartate/glutamate leucyltransferase (258 aa).

The protein belongs to the R-transferase family. Bpt subfamily.

The protein resides in the cytoplasm. It carries out the reaction N-terminal L-glutamyl-[protein] + L-leucyl-tRNA(Leu) = N-terminal L-leucyl-L-glutamyl-[protein] + tRNA(Leu) + H(+). The catalysed reaction is N-terminal L-aspartyl-[protein] + L-leucyl-tRNA(Leu) = N-terminal L-leucyl-L-aspartyl-[protein] + tRNA(Leu) + H(+). Its function is as follows. Functions in the N-end rule pathway of protein degradation where it conjugates Leu from its aminoacyl-tRNA to the N-termini of proteins containing an N-terminal aspartate or glutamate. This chain is Aspartate/glutamate leucyltransferase, found in Rhizobium leguminosarum bv. trifolii (strain WSM2304).